Here is a 192-residue protein sequence, read N- to C-terminus: Peptidyl-tRNA hydrolase (192 aa).

Tyr-18 provides a ligand contact to tRNA. His-23 acts as the Proton acceptor in catalysis. 3 residues coordinate tRNA: Phe-69, Asn-71, and Asn-117.

It belongs to the PTH family. Monomer.

It localises to the cytoplasm. The enzyme catalyses an N-acyl-L-alpha-aminoacyl-tRNA + H2O = an N-acyl-L-amino acid + a tRNA + H(+). Hydrolyzes ribosome-free peptidyl-tRNAs (with 1 or more amino acids incorporated), which drop off the ribosome during protein synthesis, or as a result of ribosome stalling. Its function is as follows. Catalyzes the release of premature peptidyl moieties from peptidyl-tRNA molecules trapped in stalled 50S ribosomal subunits, and thus maintains levels of free tRNAs and 50S ribosomes. The sequence is that of Peptidyl-tRNA hydrolase from Neisseria meningitidis serogroup A / serotype 4A (strain DSM 15465 / Z2491).